Consider the following 746-residue polypeptide: Exostosin-1 (746 aa).

At 1-5 (MQAKK) the chain is on the cytoplasmic side. A helical; Signal-anchor for type II membrane protein transmembrane segment spans residues 6-26 (RYFILLSAGSCLALLFYFGGV). Over 27–746 (QFRASRSHSR…RKKYRDIERL (720 aa)) the chain is Lumenal. Residue Asn-89 is glycosylated (N-linked (GlcNAc...) asparagine). Disulfide bonds link Cys-98–Cys-103 and Cys-109–Cys-152. Leu-166 and Tyr-203 together coordinate a protein. UDP is bound by residues Lys-267, Lys-269, Tyr-271, and Arg-280. An intrachain disulfide couples Cys-298 to Cys-312. His-300 lines the a protein pocket. Residues Tyr-319 and Tyr-324 each coordinate UDP. N-linked (GlcNAc...) asparagine glycosylation occurs at Asn-330. 2 disulfide bridges follow: Cys-334/Cys-355 and Cys-652/Cys-704. UDP contacts are provided by Arg-346 and Glu-349.

This sequence belongs to the glycosyltransferase 47 family. As to quaternary structure, part of the heparan sulfate polymerase, a dimeric complex composed of EXT1 and EXT2. Could also form homooligomeric complexes. Interacts with NDST1. Post-translationally, N-glycosylated.

It is found in the golgi apparatus membrane. The protein resides in the golgi apparatus. Its subcellular location is the cis-Golgi network membrane. The protein localises to the endoplasmic reticulum membrane. It carries out the reaction 3-O-{alpha-D-GlcNAc-[(1-&gt;4)-beta-D-GlcA-(1-&gt;4)-alpha-D-GlcNAc](n)-(1-&gt;4)-beta-D-GlcA-(1-&gt;3)-beta-D-Gal-(1-&gt;3)-beta-D-Gal-(1-&gt;4)-beta-D-Xyl}-L-seryl-[protein] + UDP-alpha-D-glucuronate = 3-O-{[(1-&gt;4)-beta-D-GlcA-(1-&gt;4)-alpha-D-GlcNAc](n+1)-(1-&gt;4)-beta-D-GlcA-(1-&gt;3)-beta-D-Gal-(1-&gt;3)-beta-D-Gal-(1-&gt;4)-beta-D-Xyl}-L-seryl-[protein] + UDP + H(+). Its pathway is protein modification; protein glycosylation. Its function is as follows. Glycosyltransferase forming with EXT2 the heterodimeric heparan sulfate polymerase which catalyzes the elongation of the heparan sulfate glycan backbone. Glycan backbone extension consists in the alternating transfer of (1-&gt;4)-beta-D-GlcA and (1-&gt;4)-alpha-D-GlcNAc residues from their respective UDP-sugar donors. Both EXT1 and EXT2 are required for the full activity of the polymerase since EXT1 bears the N-acetylglucosaminyl-proteoglycan 4-beta-glucuronosyltransferase activity within the complex while EXT2 carries the glucuronosyl-N-acetylglucosaminyl-proteoglycan 4-alpha-N-acetylglucosaminyltransferase activity. Heparan sulfate proteoglycans are ubiquitous components of the extracellular matrix and play an important role in tissue homeostasis and signaling. This is Exostosin-1 from Cricetulus griseus (Chinese hamster).